A 578-amino-acid polypeptide reads, in one-letter code: Lipoprotein A (578 aa).

A signal peptide spans 1–27 (MNKKYFKKYSWVLILSTSILAPMTLAS). Cys-28 carries the N-palmitoyl cysteine lipid modification. Cys-28 carries S-diacylglycerol cysteine lipidation. Disordered regions lie at residues 35 to 135 (KEDK…NTSA) and 172 to 203 (AKDD…EVKD). Residues 41–50 (NDSSNLSNKT) are compositionally biased toward polar residues. A compositionally biased stretch (basic and acidic residues) spans 51-74 (NKSDPNDHLKDKDKNVSQDNKDST). The span at 75-96 (NKAVSNENSQTQSQKTNESSQN) shows a compositional bias: polar residues. Over residues 108-119 (ITNQNSSSNTKS) the composition is skewed to low complexity. Basic and acidic residues predominate over residues 172–181 (AKDDSKEKSK).

Belongs to the M.pulmonis LipAB lipoprotein family.

The protein resides in the cell membrane. In Mycoplasmopsis pulmonis (strain UAB CTIP) (Mycoplasma pulmonis), this protein is Lipoprotein A (lipA).